We begin with the raw amino-acid sequence, 631 residues long: 1-deoxy-D-xylulose-5-phosphate synthase (631 aa).

Residues His-73 and 114–116 each bind thiamine diphosphate; that span reads SHA. Asp-145 provides a ligand contact to Mg(2+). Residues 146-147, Asn-175, Tyr-286, and Glu-368 each bind thiamine diphosphate; that span reads GA. Residue Asn-175 coordinates Mg(2+).

The protein belongs to the transketolase family. DXPS subfamily. Homodimer. Mg(2+) is required as a cofactor. Thiamine diphosphate serves as cofactor.

It carries out the reaction D-glyceraldehyde 3-phosphate + pyruvate + H(+) = 1-deoxy-D-xylulose 5-phosphate + CO2. It functions in the pathway metabolic intermediate biosynthesis; 1-deoxy-D-xylulose 5-phosphate biosynthesis; 1-deoxy-D-xylulose 5-phosphate from D-glyceraldehyde 3-phosphate and pyruvate: step 1/1. Its function is as follows. Catalyzes the acyloin condensation reaction between C atoms 2 and 3 of pyruvate and glyceraldehyde 3-phosphate to yield 1-deoxy-D-xylulose-5-phosphate (DXP). This Nocardia farcinica (strain IFM 10152) protein is 1-deoxy-D-xylulose-5-phosphate synthase.